A 589-amino-acid polypeptide reads, in one-letter code: Oligo-1,6-glucosidase IMA3 (589 aa).

Aspartate 215 (nucleophile) is an active-site residue. Residue glutamate 277 is the Proton donor of the active site.

This sequence belongs to the glycosyl hydrolase 13 family.

The protein resides in the cytoplasm. The catalysed reaction is Hydrolysis of (1-&gt;6)-alpha-D-glucosidic linkages in some oligosaccharides produced from starch and glycogen by alpha-amylase, and in isomaltose.. Its function is as follows. Alpha-glucosidase with broad substrate specificity for alpha-1,4- and alpha-1,6-glucosides. Not required for isomaltose utilization, but overexpression allows the IMA1 null mutant to grow on isomaltose. In Saccharomyces cerevisiae (strain ATCC 204508 / S288c) (Baker's yeast), this protein is Oligo-1,6-glucosidase IMA3 (IMA3).